Consider the following 344-residue polypeptide: Heat-inducible transcription repressor HrcA (344 aa).

This sequence belongs to the HrcA family.

In terms of biological role, negative regulator of class I heat shock genes (grpE-dnaK-dnaJ and groELS operons). Prevents heat-shock induction of these operons. The protein is Heat-inducible transcription repressor HrcA of Geobacillus kaustophilus (strain HTA426).